The primary structure comprises 360 residues: Isopentenyl-diphosphate delta-isomerase (360 aa).

12–13 contacts substrate; that stretch reads RK. Residues S70, 71-73, S101, and N130 each bind FMN; that span reads SMT. A substrate-binding site is contributed by 101 to 103; that stretch reads SMR. Residue Q165 participates in substrate binding. E166 is a Mg(2+) binding site. Residues K197, 288–290, and 309–310 contribute to the FMN site; these read GIR and AG.

Belongs to the IPP isomerase type 2 family. In terms of assembly, homooctamer. Dimer of tetramers. The cofactor is FMN. NADPH is required as a cofactor. Requires Mg(2+) as cofactor.

It localises to the cytoplasm. The enzyme catalyses isopentenyl diphosphate = dimethylallyl diphosphate. In terms of biological role, involved in the biosynthesis of isoprenoids. Catalyzes the 1,3-allylic rearrangement of the homoallylic substrate isopentenyl (IPP) to its allylic isomer, dimethylallyl diphosphate (DMAPP). In Chlorobium limicola (strain DSM 245 / NBRC 103803 / 6330), this protein is Isopentenyl-diphosphate delta-isomerase.